A 126-amino-acid chain; its full sequence is Large ribosomal subunit protein bL12 (126 aa).

The span at 104-116 (AKKEDAEKAKAQL) shows a compositional bias: basic and acidic residues. The segment at 104–126 (AKKEDAEKAKAQLEEAGATVELK) is disordered. Residues 117-126 (EEAGATVELK) are compositionally biased toward low complexity.

This sequence belongs to the bacterial ribosomal protein bL12 family. In terms of assembly, homodimer. Part of the ribosomal stalk of the 50S ribosomal subunit. Forms a multimeric L10(L12)X complex, where L10 forms an elongated spine to which 2 to 4 L12 dimers bind in a sequential fashion. Binds GTP-bound translation factors.

Its function is as follows. Forms part of the ribosomal stalk which helps the ribosome interact with GTP-bound translation factors. Is thus essential for accurate translation. This is Large ribosomal subunit protein bL12 from Bifidobacterium animalis subsp. lactis (strain AD011).